The primary structure comprises 740 residues: Catalase-peroxidase (740 aa).

The tryptophyl-tyrosyl-methioninium (Trp-Tyr) (with M-255) cross-link spans 107 to 229 (WHAAGTYRIH…LAAVQMGLIY (123 aa)). Histidine 108 functions as the Proton acceptor in the catalytic mechanism. A cross-link (tryptophyl-tyrosyl-methioninium (Tyr-Met) (with W-107)) is located at residues 229–255 (YVNPEGPNGNPDPMAAAVDIRETFRRM). Residue histidine 270 participates in heme b binding. Residue tryptophan 321 is the Tryptophan radical intermediate of the active site.

The protein belongs to the peroxidase family. Peroxidase/catalase subfamily. In terms of assembly, homodimer. Requires heme b as cofactor. In terms of processing, formation of the three residue Trp-Tyr-Met cross-link is important for the catalase, but not the peroxidase activity of the enzyme.

It carries out the reaction H2O2 + AH2 = A + 2 H2O. The catalysed reaction is 2 H2O2 = O2 + 2 H2O. In terms of biological role, bifunctional enzyme with both catalase and broad-spectrum peroxidase activity, oxidizing various electron donors including NADP(H). Protects M.tuberculosis against toxic reactive oxygen species (ROS) including hydrogen peroxide as well as organic peroxides and thus contributes to its survival within host macrophages by countering the phagocyte oxidative burst. Also displays efficient peroxynitritase activity, which may help the bacterium to persist in macrophages. Its function is as follows. Catalyzes the oxidative activation of the antitubercular pro-drug isoniazid (INH) to generate an isonicotinoyl radical that then reacts nonenzymatically with NAD to form an isonicotinoyl-NAD adduct which inhibits InhA. The protein is Catalase-peroxidase of Mycobacterium tuberculosis (strain CDC 1551 / Oshkosh).